Reading from the N-terminus, the 460-residue chain is Vitamin K-dependent protein C (460 aa).

The first 18 residues, methionine 1–serine 18, serve as a signal peptide directing secretion. Residues isoleucine 19–arginine 41 constitute a propeptide that is removed on maturation. The region spanning alanine 42–aspartate 87 is the Gla domain. 4-carboxyglutamate occurs at positions 47, 48, 55, 57, 60, 61, 66, 67, 70, and 76. Cysteine 58 and cysteine 63 are joined by a disulfide. Cystine bridges form between cysteine 91–cysteine 110, cysteine 100–cysteine 105, cysteine 104–cysteine 119, cysteine 121–cysteine 130, cysteine 139–cysteine 150, cysteine 146–cysteine 159, cysteine 161–cysteine 174, cysteine 182–cysteine 319, and cysteine 238–cysteine 254. EGF-like domains lie at leucine 96 to glutamine 131 and arginine 135 to lysine 175. Residue aspartate 112 is modified to (3R)-3-hydroxyaspartate. One can recognise a Peptidase S1 domain in the interval valine 213–glycine 449. The N-linked (GlcNAc...) asparagine glycan is linked to asparagine 214. Histidine 253 (charge relay system) is an active-site residue. The N-linked (GlcNAc...) asparagine glycan is linked to asparagine 290. Aspartate 299 (charge relay system) is an active-site residue. Asparagine 354 is a glycosylation site (N-linked (GlcNAc...) asparagine). 2 disulfide bridges follow: cysteine 372–cysteine 386 and cysteine 397–cysteine 425. Serine 401 (charge relay system) is an active-site residue.

Belongs to the peptidase S1 family. In terms of assembly, synthesized as a single chain precursor, which is cleaved into a light chain and a heavy chain held together by a disulfide bond. The enzyme is then activated by thrombin, which cleaves a tetradecapeptide from the amino end of the heavy chain; this reaction, which occurs at the surface of endothelial cells, is strongly promoted by thrombomodulin. Post-translationally, the vitamin K-dependent, enzymatic carboxylation of some Glu residues allows the modified protein to bind calcium. The iron and 2-oxoglutarate dependent 3-hydroxylation of aspartate and asparagine is (R) stereospecific within EGF domains. As to expression, plasma; synthesized in the liver.

It localises to the secreted. It is found in the golgi apparatus. Its subcellular location is the endoplasmic reticulum. The enzyme catalyses Degradation of blood coagulation factors Va and VIIIa.. Functionally, protein C is a vitamin K-dependent serine protease that regulates blood coagulation by inactivating factors Va and VIIIa in the presence of calcium ions and phospholipids. Exerts a protective effect on the endothelial cell barrier function. In Mus musculus (Mouse), this protein is Vitamin K-dependent protein C (Proc).